Reading from the N-terminus, the 271-residue chain is Formamidopyrimidine-DNA glycosylase (271 aa).

P2 serves as the catalytic Schiff-base intermediate with DNA. Catalysis depends on E3, which acts as the Proton donor. The active-site Proton donor; for beta-elimination activity is the K58. DNA is bound by residues H92, R111, and R152. The segment at 237 to 271 (TVYGREGEPCKQCGRVLKHAMIGQRATVWCGSCQR) adopts an FPG-type zinc-finger fold. R261 functions as the Proton donor; for delta-elimination activity in the catalytic mechanism.

The protein belongs to the FPG family. As to quaternary structure, monomer. The cofactor is Zn(2+).

It carries out the reaction Hydrolysis of DNA containing ring-opened 7-methylguanine residues, releasing 2,6-diamino-4-hydroxy-5-(N-methyl)formamidopyrimidine.. It catalyses the reaction 2'-deoxyribonucleotide-(2'-deoxyribose 5'-phosphate)-2'-deoxyribonucleotide-DNA = a 3'-end 2'-deoxyribonucleotide-(2,3-dehydro-2,3-deoxyribose 5'-phosphate)-DNA + a 5'-end 5'-phospho-2'-deoxyribonucleoside-DNA + H(+). Functionally, involved in base excision repair of DNA damaged by oxidation or by mutagenic agents. Acts as a DNA glycosylase that recognizes and removes damaged bases. Has a preference for oxidized purines, such as 7,8-dihydro-8-oxoguanine (8-oxoG). Has AP (apurinic/apyrimidinic) lyase activity and introduces nicks in the DNA strand. Cleaves the DNA backbone by beta-delta elimination to generate a single-strand break at the site of the removed base with both 3'- and 5'-phosphates. The protein is Formamidopyrimidine-DNA glycosylase of Xanthomonas oryzae pv. oryzae (strain MAFF 311018).